The sequence spans 194 residues: Imidazoleglycerol-phosphate dehydratase (194 aa).

The protein belongs to the imidazoleglycerol-phosphate dehydratase family.

The protein resides in the cytoplasm. The enzyme catalyses D-erythro-1-(imidazol-4-yl)glycerol 3-phosphate = 3-(imidazol-4-yl)-2-oxopropyl phosphate + H2O. It participates in amino-acid biosynthesis; L-histidine biosynthesis; L-histidine from 5-phospho-alpha-D-ribose 1-diphosphate: step 6/9. This is Imidazoleglycerol-phosphate dehydratase from Bacillus subtilis (strain 168).